A 421-amino-acid chain; its full sequence is ATP-dependent RNA helicase RhlB (421 aa).

The short motif at 9–37 (QKFSDFALHAKVIEALENKGFHYCTPIQA) is the Q motif element. One can recognise a Helicase ATP-binding domain in the interval 40 to 219 (LPLTLAGRDV…FEQMNNAEYV (180 aa)). 53–60 (AQTGTGKT) lines the ATP pocket. Positions 165–168 (DEAD) match the DEAD box motif. Residues 245–390 (RLLQTLIEEE…QSKYNPDALL (146 aa)) enclose the Helicase C-terminal domain. The segment at 386-421 (PDALLSELPPPKRLTRARSGNGPRRTGAPRNRRRPG) is disordered. Over residues 405 to 414 (GNGPRRTGAP) the composition is skewed to low complexity.

The protein belongs to the DEAD box helicase family. RhlB subfamily. Component of the RNA degradosome, which is a multiprotein complex involved in RNA processing and mRNA degradation.

The protein localises to the cytoplasm. It carries out the reaction ATP + H2O = ADP + phosphate + H(+). Its function is as follows. DEAD-box RNA helicase involved in RNA degradation. Has RNA-dependent ATPase activity and unwinds double-stranded RNA. This chain is ATP-dependent RNA helicase RhlB, found in Enterobacter sp. (strain 638).